The sequence spans 420 residues: L-cysteine:1D-myo-inositol 2-amino-2-deoxy-alpha-D-glucopyranoside ligase (420 aa).

Residue cysteine 43 coordinates Zn(2+). L-cysteinyl-5'-AMP-binding positions include 43–46 (CGIT), threonine 58, and 81–83 (NIT). Positions 45 to 55 (ITPYDATHLGH) match the 'HIGH' region motif. A 'ERGGDP' region motif is present at residues 187–192 (ERGGDP). Tryptophan 227 provides a ligand contact to L-cysteinyl-5'-AMP. Position 231 (cysteine 231) interacts with Zn(2+). An L-cysteinyl-5'-AMP-binding site is contributed by 249–251 (GSD). Histidine 256 serves as a coordination point for Zn(2+). Isoleucine 289 lines the L-cysteinyl-5'-AMP pocket. Positions 295 to 299 (KMSKS) match the 'KMSKS' region motif.

This sequence belongs to the class-I aminoacyl-tRNA synthetase family. MshC subfamily. Monomer. Zn(2+) is required as a cofactor.

It carries out the reaction 1D-myo-inositol 2-amino-2-deoxy-alpha-D-glucopyranoside + L-cysteine + ATP = 1D-myo-inositol 2-(L-cysteinylamino)-2-deoxy-alpha-D-glucopyranoside + AMP + diphosphate + H(+). Functionally, catalyzes the ATP-dependent condensation of GlcN-Ins and L-cysteine to form L-Cys-GlcN-Ins. This chain is L-cysteine:1D-myo-inositol 2-amino-2-deoxy-alpha-D-glucopyranoside ligase, found in Segniliparus rotundus (strain ATCC BAA-972 / CDC 1076 / CIP 108378 / DSM 44985 / JCM 13578).